A 262-amino-acid polypeptide reads, in one-letter code: Acyl-[acyl-carrier-protein]--UDP-N-acetylglucosamine O-acyltransferase (262 aa).

The protein belongs to the transferase hexapeptide repeat family. LpxA subfamily. In terms of assembly, homotrimer.

It localises to the cytoplasm. The catalysed reaction is a (3R)-hydroxyacyl-[ACP] + UDP-N-acetyl-alpha-D-glucosamine = a UDP-3-O-[(3R)-3-hydroxyacyl]-N-acetyl-alpha-D-glucosamine + holo-[ACP]. It participates in glycolipid biosynthesis; lipid IV(A) biosynthesis; lipid IV(A) from (3R)-3-hydroxytetradecanoyl-[acyl-carrier-protein] and UDP-N-acetyl-alpha-D-glucosamine: step 1/6. Its function is as follows. Involved in the biosynthesis of lipid A, a phosphorylated glycolipid that anchors the lipopolysaccharide to the outer membrane of the cell. The sequence is that of Acyl-[acyl-carrier-protein]--UDP-N-acetylglucosamine O-acyltransferase from Wigglesworthia glossinidia brevipalpis.